Consider the following 514-residue polypeptide: Nitric oxide reductase transcription regulator NorR1 (514 aa).

A 4-aspartylphosphate modification is found at Asp-54. Residues 187 to 416 (IIGQSQAIAG…LEHVISRAAL (230 aa)) form the Sigma-54 factor interaction domain. Residues 215–222 (GETGVGKE) and 287–296 (EVGELPLSIQ) each bind ATP. A DNA-binding region (H-T-H motif) is located at residues 490-509 (WAKAARQLGMDASNLHKLAK).

Its pathway is nitrogen metabolism; nitrate reduction (denitrification) [regulation]. In terms of biological role, required for the nitric oxide (NO) induced expression of NO reductase. Not required for expression of 2 other pathway members, nitrate reductase (nirS) and nitrous oxide reductase (nosZ). This is Nitric oxide reductase transcription regulator NorR1 (norR1) from Cupriavidus necator (strain ATCC 17699 / DSM 428 / KCTC 22496 / NCIMB 10442 / H16 / Stanier 337) (Ralstonia eutropha).